Here is a 154-residue protein sequence, read N- to C-terminus: Ribosome maturation factor RimP (154 aa).

The protein belongs to the RimP family.

It localises to the cytoplasm. Required for maturation of 30S ribosomal subunits. In Alkaliphilus oremlandii (strain OhILAs) (Clostridium oremlandii (strain OhILAs)), this protein is Ribosome maturation factor RimP.